Here is a 496-residue protein sequence, read N- to C-terminus: MATSNKNMLLNYVPVYVMLPLGVINVNNVFEDPDGLKEQLVQLRAAGVDGVMIDVWWGIIEQKGPKEYDWSAYKSLFQLVQKCGLKLQAIMSFHQCGGNVGDVVNIPLPKWVLDIGESDPDIFYTNRSGIRNQEYLSIGVDNKPIFHGRTAIEIYSDYMKSFRENMSDLLKSEVIIDIEVGLGPAGELRYPSYPQNQGWQFPGIGEFQCYDKYLRESFKAAAAKAGHSEWELPDDAGTYNDVPESTEFFKTNGTYLTEKGKFFLTWYSNQLLNHGDQILDEANKAFLGCKVKLAIKVSGIHWWYKAPNHAAELTAGYYNLDDRDGYRPIAKIVSRHHAILNFTCLEMRDSEQSSDAHSSPQKLVQQVLSGGWRENIEVAGENALSRYDATAYNQIILNARPQGVNKDGPPKLRMYGVTYLRLSDDLMQQSNFDIFKKFVVKMHADQDYCSDPEKYNHGIPPLKRSGPKIPDDVLNEATKPIPPFPWDSETDMKVDG.

Residues Asp-54, His-94, and Asp-102 each contribute to the substrate site. Glu-187 acts as the Proton donor in catalysis. The substrate site is built by Lys-296, His-301, and Thr-343. Residue Glu-381 is the Proton acceptor of the active site. Residues 382–383 (NA) and Arg-421 each bind substrate. The interval 455–496 (YNHGIPPLKRSGPKIPDDVLNEATKPIPPFPWDSETDMKVDG) is disordered.

Belongs to the glycosyl hydrolase 14 family.

The enzyme catalyses Hydrolysis of (1-&gt;4)-alpha-D-glucosidic linkages in polysaccharides so as to remove successive maltose units from the non-reducing ends of the chains.. The protein is Beta-amylase (BMY1) of Medicago sativa (Alfalfa).